Reading from the N-terminus, the 508-residue chain is MGVRDSHGEAAGTPDPVEKGIATLNTIRIGVKAMVHKDGALRKAEILSIKQRKDGLAFYVHYVDFNKRLDEWVASSRLDLSQEVEWPQPEKPEKKKSGPAKAPSKNKRVRAGSRDVSATPDTLTGKNTNVGKAQRPSKAGGKENRGDETPADLSMLASEAVSADGTPKAVSEDIDMMDASFTDAKEIKEEERALGLMSREEEIEKLRTSGSMTQNPTEVHRVRNLDRLQMGKYDIEPWYFSPYPASFSDAEVVYIDEFCLSYFDNKRAFERHRTKCTLTHPPGNEIYRDDNISFFEVDGRRQRTWCRNLCLLSKLFLDHKTLYYDVDPFLFYCMCTRDETGCHLVGYFSKEKESGEGYNLACILTLPQYQRRGYGRLLISFSYELSKREGKVGSPEKPLSDLGLLGYRQYWRETLVEILLDSGRETVSENELAMLTSMTEKDVHETLVTFKMLRYNKGQWIIVLTDEVIEERNKRLEKEKIKGSRKIDPARLQWKPPVFTASSRTWNW.

In terms of domain architecture, Tudor-knot spans 27–80 (IRIGVKAMVHKDGALRKAEILSIKQRKDGLAFYVHYVDFNKRLDEWVASSRLDL). Positions 84-150 (VEWPQPEKPE…GKENRGDETP (67 aa)) are disordered. Residues 119 to 131 (TPDTLTGKNTNVG) show a composition bias toward polar residues. The 277-residue stretch at 220–496 (HRVRNLDRLQ…IDPARLQWKP (277 aa)) folds into the MYST-type HAT domain. The C2HC MYST-type; degenerate zinc finger occupies 253–278 (VYIDEFCLSYFDNKRAFERHRTKCTL). Residues 303-324 (RTWCRNLCLLSKLFLDHKTLYY) carry the ESA1-RPD3 motif motif. The residue at position 320 (lysine 320) is an N6-acetyllysine; by autocatalysis. Acetyl-CoA-binding positions include 361-365 (ACILT) and 370-376 (QRRGYGR). Glutamate 396 acts as the Proton donor/acceptor in catalysis. Residue serine 400 participates in acetyl-CoA binding.

Belongs to the MYST (SAS/MOZ) family. In terms of assembly, component of the NuA4 histone acetyltransferase complex. Post-translationally, autoacetylation at Lys-320 is required for proper function.

The protein localises to the nucleus. It is found in the chromosome. The catalysed reaction is L-lysyl-[histone] + acetyl-CoA = N(6)-acetyl-L-lysyl-[histone] + CoA + H(+). The enzyme catalyses L-lysyl-[protein] + acetyl-CoA = N(6)-acetyl-L-lysyl-[protein] + CoA + H(+). It carries out the reaction 2-hydroxyisobutanoyl-CoA + L-lysyl-[protein] = N(6)-(2-hydroxyisobutanoyl)-L-lysyl-[protein] + CoA + H(+). It catalyses the reaction (2E)-butenoyl-CoA + L-lysyl-[protein] = N(6)-(2E)-butenoyl-L-lysyl-[protein] + CoA + H(+). In terms of biological role, catalytic component of the NuA4 histone acetyltransferase (HAT) complex which is involved in epigenetic transcriptional activation of selected genes principally by acetylation of nucleosomal histones H4, H3, H2B, H2A and H2A variant H2A.Z. Acetylates histone H4 to form H4K5ac, H4K8ac, H4K12ac and H4K16ac, histone H3 to form H3K14ac, and histone H2A to form H2AK4ac and H2AK7ac. The NuA4 complex is involved in the DNA damage response and is required for chromosome segregation. The NuA4 complex plays a direct role in repair of DNA double-strand breaks (DSBs) through homologous recombination. Recruitment to promoters depends on H3K4me. Also acetylates non-histone proteins. In addition to protein acetyltransferase, can use different acyl-CoA substrates, such as 2-hydroxyisobutanoyl-CoA (2-hydroxyisobutyryl-CoA) or (2E)-butenoyl-CoA (crotonyl-CoA), and is able to mediate protein 2-hydroxyisobutyrylation and crotonylation, respectively. This is Histone acetyltransferase esa1 (esa1) from Emericella nidulans (strain FGSC A4 / ATCC 38163 / CBS 112.46 / NRRL 194 / M139) (Aspergillus nidulans).